We begin with the raw amino-acid sequence, 378 residues long: Erythronate-4-phosphate dehydrogenase (378 aa).

Substrate is bound by residues serine 45 and threonine 66. The NAD(+) site is built by aspartate 146 and threonine 175. Residue arginine 208 is part of the active site. Aspartate 232 serves as a coordination point for NAD(+). The active site involves glutamate 237. The active-site Proton donor is the histidine 254. Glycine 257 contributes to the NAD(+) binding site. Tyrosine 258 lines the substrate pocket.

The protein belongs to the D-isomer specific 2-hydroxyacid dehydrogenase family. PdxB subfamily. Homodimer.

It localises to the cytoplasm. The enzyme catalyses 4-phospho-D-erythronate + NAD(+) = (R)-3-hydroxy-2-oxo-4-phosphooxybutanoate + NADH + H(+). The protein operates within cofactor biosynthesis; pyridoxine 5'-phosphate biosynthesis; pyridoxine 5'-phosphate from D-erythrose 4-phosphate: step 2/5. Functionally, catalyzes the oxidation of erythronate-4-phosphate to 3-hydroxy-2-oxo-4-phosphonooxybutanoate. The protein is Erythronate-4-phosphate dehydrogenase of Escherichia coli O45:K1 (strain S88 / ExPEC).